Reading from the N-terminus, the 436-residue chain is 4-hydroxyphenylpyruvate dioxygenase (436 aa).

VOC domains follow at residues 38-194 and 210-370; these read RFHH…GFEV and RLDH…IFTK. Positions 213, 295, and 381 each coordinate Fe cation.

Belongs to the 4HPPD family. Fe cation is required as a cofactor.

The protein localises to the cytoplasm. It catalyses the reaction 3-(4-hydroxyphenyl)pyruvate + O2 = homogentisate + CO2. Its pathway is amino-acid degradation; L-phenylalanine degradation; acetoacetate and fumarate from L-phenylalanine: step 3/6. It functions in the pathway cofactor biosynthesis; prenylquinone biosynthesis. This is 4-hydroxyphenylpyruvate dioxygenase from Plectranthus scutellarioides (Coleus).